Reading from the N-terminus, the 279-residue chain is Large ribosomal subunit protein uL2 (279 aa).

The interval 223–279 is disordered; that stretch reads TVRGSAMNPNDHPHGGGEGRSPVGMDAPRTPWGKRHMGVKTRNNKKSSTSMIVRRRK. The segment covering 254–267 has biased composition (basic residues); the sequence is WGKRHMGVKTRNNK.

The protein belongs to the universal ribosomal protein uL2 family. As to quaternary structure, part of the 50S ribosomal subunit. Forms a bridge to the 30S subunit in the 70S ribosome.

Functionally, one of the primary rRNA binding proteins. Required for association of the 30S and 50S subunits to form the 70S ribosome, for tRNA binding and peptide bond formation. It has been suggested to have peptidyltransferase activity; this is somewhat controversial. Makes several contacts with the 16S rRNA in the 70S ribosome. This Ureaplasma parvum serovar 3 (strain ATCC 27815 / 27 / NCTC 11736) protein is Large ribosomal subunit protein uL2.